The primary structure comprises 907 residues: Putative ATP-dependent DNA helicase DDX11-like protein 8 (907 aa).

Positions 9–447 (GAIHFPFPFT…KNLMYLKQIL (439 aa)) constitute a Helicase ATP-binding domain. ATP is bound at residue 44-51 (SPTGTGKS). Positions 202-222 (YESDEEKKVASGHRVDEDEDD) are disordered. The span at 206–217 (EEKKVASGHRVD) shows a compositional bias: basic and acidic residues. A Phosphoserine modification is found at S264. [4Fe-4S] cluster-binding residues include C269 and C287. Positions 291–306 (QRSRHEKKKGAEEEKP) are enriched in basic and acidic residues. The disordered stretch occupies residues 291-314 (QRSRHEKKKGAEEEKPKRRRQEKQ). The [4Fe-4S] cluster site is built by C317 and C352. Positions 395–398 (DEAH) match the DEAH motif.

It belongs to the DEAD box helicase family. DEAH subfamily. DDX11/CHL1 sub-subfamily. It depends on [4Fe-4S] cluster as a cofactor.

The protein resides in the nucleus. The protein localises to the nucleolus. Putative DNA helicase. This chain is Putative ATP-dependent DNA helicase DDX11-like protein 8 (DDX11L8), found in Homo sapiens (Human).